The following is a 164-amino-acid chain: Zinc finger A20 and AN1 domain-containing stress-associated protein 1 (164 aa).

The segment at 16–50 (APEITLCANSCGFPGNPATQNLCQNCFLAATASTS) adopts an A20-type zinc-finger fold. Zn(2+) contacts are provided by cysteine 22, cysteine 26, cysteine 38, and cysteine 41. Over residues 48 to 58 (STSSPSSLSSP) the composition is skewed to low complexity. The interval 48–81 (STSSPSSLSSPVLDKQPPRPAAPLVEPQAPLPPP) is disordered. The AN1-type zinc-finger motif lies at 99-145 (TSAVNRCSRCRKRVGLTGFRCRCGHLFCGEHRYSDRHGCSYDYKSAA). Residues cysteine 105, cysteine 108, cysteine 119, cysteine 121, cysteine 126, histidine 129, histidine 135, and cysteine 137 each contribute to the Zn(2+) site.

Functionally, may be involved in environmental stress response. The sequence is that of Zinc finger A20 and AN1 domain-containing stress-associated protein 1 (SAP1) from Oryza sativa subsp. indica (Rice).